The following is an 833-amino-acid chain: Putative GPI inositol-deacylase C (833 aa).

Serine 130 is a catalytic residue. 2 N-linked (GlcNAc...) asparagine glycosylation sites follow: asparagine 191 and asparagine 456. Transmembrane regions (helical) follow at residues 521–541 (ILFI…QFHA), 560–580 (YLLT…LSQV), 617–637 (VLAP…TELV), 672–692 (TVFV…QLAF), and 723–743 (TICV…AVWI). Asparagine 772 carries an N-linked (GlcNAc...) asparagine glycan. A helical transmembrane segment spans residues 787-807 (LLLAYTSLHCLFYGMMQAFMI).

This sequence belongs to the GPI inositol-deacylase family.

Its subcellular location is the endoplasmic reticulum membrane. In terms of biological role, involved in inositol deacylation of GPI-anchored proteins which plays important roles in the quality control and ER-associated degradation of GPI-anchored proteins. In Yarrowia lipolytica (strain CLIB 122 / E 150) (Yeast), this protein is Putative GPI inositol-deacylase C (BST1C).